A 249-amino-acid chain; its full sequence is Domoic acid biosynthesis cluster protein B (249 aa).

Its function is as follows. Unknown function: part of the gene cluster that mediates the biosynthesis of domoic acid (DA) and derivatives, natural products with neurochemical activity acting as ionotropic glutamate receptor (iGluR) agonists, thus being neurotoxins causing amnesic shellfish poisoning (ASP). The polypeptide is Domoic acid biosynthesis cluster protein B (Pseudo-nitzschia multiseries (Marine planktonic diatom)).